The following is a 699-amino-acid chain: Polyribonucleotide nucleotidyltransferase (699 aa).

Residues Asp488 and Asp494 each coordinate Mg(2+). The KH domain occupies 555–614 (PRIYSIKVNPDKIKDVIGKGGSVIRSLTEETNTIIDIEDNGIIKIVALDYDKAKQAIRRI). The region spanning 624-692 (GAVYTGKVSH…RQGRIRLSMK (69 aa)) is the S1 motif domain.

This sequence belongs to the polyribonucleotide nucleotidyltransferase family. As to quaternary structure, component of the RNA degradosome, which is a multiprotein complex involved in RNA processing and mRNA degradation. Mg(2+) is required as a cofactor.

Its subcellular location is the cytoplasm. It carries out the reaction RNA(n+1) + phosphate = RNA(n) + a ribonucleoside 5'-diphosphate. Functionally, involved in mRNA degradation. Catalyzes the phosphorolysis of single-stranded polyribonucleotides processively in the 3'- to 5'-direction. The protein is Polyribonucleotide nucleotidyltransferase of Blochmanniella pennsylvanica (strain BPEN).